The sequence spans 520 residues: 2-isopropylmalate synthase (520 aa).

The 263-residue stretch at 12–274 (IRIFDTTLRD…DSAINTPRIV (263 aa)) folds into the Pyruvate carboxyltransferase domain. Positions 21, 209, 211, and 245 each coordinate Mn(2+). Positions 396–520 (RLASMTISDV…VVAGKTAAVA (125 aa)) are regulatory domain.

It belongs to the alpha-IPM synthase/homocitrate synthase family. LeuA type 1 subfamily. As to quaternary structure, homodimer. The cofactor is Mn(2+).

It localises to the cytoplasm. It catalyses the reaction 3-methyl-2-oxobutanoate + acetyl-CoA + H2O = (2S)-2-isopropylmalate + CoA + H(+). The protein operates within amino-acid biosynthesis; L-leucine biosynthesis; L-leucine from 3-methyl-2-oxobutanoate: step 1/4. Its function is as follows. Catalyzes the condensation of the acetyl group of acetyl-CoA with 3-methyl-2-oxobutanoate (2-ketoisovalerate) to form 3-carboxy-3-hydroxy-4-methylpentanoate (2-isopropylmalate). This is 2-isopropylmalate synthase from Xanthomonas euvesicatoria pv. vesicatoria (strain 85-10) (Xanthomonas campestris pv. vesicatoria).